Consider the following 432-residue polypeptide: Trigger factor (432 aa).

In terms of domain architecture, PPIase FKBP-type spans 161-246; sequence GKRVSIDFVG…VNKVEARQLP (86 aa).

This sequence belongs to the FKBP-type PPIase family. Tig subfamily.

The protein resides in the cytoplasm. The catalysed reaction is [protein]-peptidylproline (omega=180) = [protein]-peptidylproline (omega=0). In terms of biological role, involved in protein export. Acts as a chaperone by maintaining the newly synthesized protein in an open conformation. Functions as a peptidyl-prolyl cis-trans isomerase. In Vibrio vulnificus (strain YJ016), this protein is Trigger factor.